The following is a 162-amino-acid chain: Functional amyloid chaperone FapA (162 aa).

The first 28 residues, 1–28 (MSGSSLRIVVPALLVIVGSVPVSLPAHA), serve as a signal peptide directing secretion.

Belongs to the FapA family. As to quaternary structure, monomer in solution. Interacts with FapC but not FapB in vitro.

Its subcellular location is the periplasm. Functionally, an intrinsically disordered chaperone for fibril amyloid FapC that guards against fibrillation within the periplasm. Upon overexpression of the endogenous six-gene locus (fapA-fapF), cells form large clumps during liquid growth, make large amounts of biofilm and produce amyloid fibrils. The sequence is that of Functional amyloid chaperone FapA from Pseudomonas aeruginosa (strain ATCC 15692 / DSM 22644 / CIP 104116 / JCM 14847 / LMG 12228 / 1C / PRS 101 / PAO1).